The primary structure comprises 424 residues: Serine--tRNA ligase (424 aa).

229-231 (TAE) is a binding site for L-serine. Residues 260 to 262 (RTE) and Val-276 each bind ATP. Glu-283 is a binding site for L-serine. 347 to 350 (EVTS) serves as a coordination point for ATP. Thr-382 serves as a coordination point for L-serine.

This sequence belongs to the class-II aminoacyl-tRNA synthetase family. Type-1 seryl-tRNA synthetase subfamily. In terms of assembly, homodimer. The tRNA molecule binds across the dimer.

The protein localises to the cytoplasm. The catalysed reaction is tRNA(Ser) + L-serine + ATP = L-seryl-tRNA(Ser) + AMP + diphosphate + H(+). It catalyses the reaction tRNA(Sec) + L-serine + ATP = L-seryl-tRNA(Sec) + AMP + diphosphate + H(+). It functions in the pathway aminoacyl-tRNA biosynthesis; selenocysteinyl-tRNA(Sec) biosynthesis; L-seryl-tRNA(Sec) from L-serine and tRNA(Sec): step 1/1. In terms of biological role, catalyzes the attachment of serine to tRNA(Ser). Is also able to aminoacylate tRNA(Sec) with serine, to form the misacylated tRNA L-seryl-tRNA(Sec), which will be further converted into selenocysteinyl-tRNA(Sec). The chain is Serine--tRNA ligase from Rubrobacter xylanophilus (strain DSM 9941 / JCM 11954 / NBRC 16129 / PRD-1).